A 341-amino-acid polypeptide reads, in one-letter code: MKYLFFALCLYLYQGISEAEVPAEQIPLEAQALSGLPLVEYLQKNQRLFEVTATPVPYFKQRLMDLKYIDQNNIPDEEVEDEELEENNDDIPESYDPRIQWANCSSLFHIPDQANCGSCWAVSSAAAMSDRICIASKGAKQVLISAQDVVSCCTWCGDGCEGGWPISAFRFHADEGVVTGGDYNTKGSCRPYEIHPCGHHGNETYYGECVGMADTPRCKRRCLLGYPKSYPSDRYYKKAYQLKNSVKAIQKDIMKNGPVVATYTVYEDFAHYRSGIYKHKAGRKTGLHAVKVIGWGEEKGTPYWIVANSWHDDWGENGFFRMHRGSNDCGFEERMAAGSVQ.

An N-terminal signal peptide occupies residues M1–A19. A propeptide spans E20–N88 (activation peptide). Residue N103 is glycosylated (N-linked (GlcNAc...) asparagine). Intrachain disulfides connect C104-C133, C116-C160, C152-C218, C153-C156, C189-C222, and C197-C209. C119 is an active-site residue. N-linked (GlcNAc...) asparagine glycosylation is present at N202. Active-site residues include H288 and N308.

The protein belongs to the peptidase C1 family.

Expression of the protease correlates with blood-feeding and suggests a role for the protease in blood digestion. The protein is Cathepsin B-like cysteine proteinase 1 (CP-1) of Ostertagia ostertagi (Brown stomach worm).